Here is a 542-residue protein sequence, read N- to C-terminus: Calcium-dependent protein kinase 7 (542 aa).

G2 carries N-myristoyl glycine lipidation. The Protein kinase domain maps to 79-337 (YIIGRKLGQG…AHEVLRHPWI (259 aa)). Residues 85–93 (LGQGQFGTT) and K108 each bind ATP. D203 (proton acceptor) is an active-site residue. Residues 343-373 (ATDQALDPSVISRLKQFSAMNKLKKLALRVI) form an autoinhibitory domain region. In terms of domain architecture, EF-hand 1 spans 380-415 (EEIAGLREMFKAVDTKNRGVITFGELREGLRRFGAE). Residues D393, E404, D431, N433, T435, E440, D465, D467, S469, Y471, K476, D499, N501, D503, Q505, and E510 each coordinate Ca(2+). One can recognise an EF-hand 2; degenerate domain in the interval 416–451 (FKDTEIGDIMEAAHNDNNVTIHYEEFIAATLPLNKI). EF-hand domains follow at residues 452–487 (EREE…HNME) and 488–521 (DSLL…SNVG).

Belongs to the protein kinase superfamily. Ser/Thr protein kinase family. CDPK subfamily. As to expression, expressed in roots. Expressed in leaf sheaths.

It localises to the membrane. The protein resides in the cytoplasm. It is found in the cytosol. The catalysed reaction is L-seryl-[protein] + ATP = O-phospho-L-seryl-[protein] + ADP + H(+). The enzyme catalyses L-threonyl-[protein] + ATP = O-phospho-L-threonyl-[protein] + ADP + H(+). Activated by calcium. Autophosphorylation may play an important role in the regulation of the kinase activity. May play a role in signal transduction pathways that involve calcium as a second messenger. May be a signaling component in the response to gibberellin and cold stress. The protein is Calcium-dependent protein kinase 7 of Oryza sativa subsp. japonica (Rice).